We begin with the raw amino-acid sequence, 24 residues long: Coenzyme PQQ synthesis protein A (24 aa).

Positions 16–20 (EVTMY) form a cross-link, pyrroloquinoline quinone (Glu-Tyr).

The protein belongs to the PqqA family.

Its pathway is cofactor biosynthesis; pyrroloquinoline quinone biosynthesis. In terms of biological role, required for coenzyme pyrroloquinoline quinone (PQQ) biosynthesis. PQQ is probably formed by cross-linking a specific glutamate to a specific tyrosine residue and excising these residues from the peptide. This chain is Coenzyme PQQ synthesis protein A, found in Methylococcus capsulatus (strain ATCC 33009 / NCIMB 11132 / Bath).